Here is a 487-residue protein sequence, read N- to C-terminus: 3-octaprenyl-4-hydroxybenzoate carboxy-lyase (487 aa).

Position 172 (asparagine 172) interacts with Mn(2+). Prenylated FMN-binding positions include 175–177 (IYR), 189–191 (RWL), and 194–195 (RG). Glutamate 238 is a binding site for Mn(2+). The Proton donor role is filled by aspartate 287.

It belongs to the UbiD family. Homohexamer. The cofactor is prenylated FMN. It depends on Mn(2+) as a cofactor.

The protein localises to the cell membrane. The enzyme catalyses a 4-hydroxy-3-(all-trans-polyprenyl)benzoate + H(+) = a 2-(all-trans-polyprenyl)phenol + CO2. Its pathway is cofactor biosynthesis; ubiquinone biosynthesis. Catalyzes the decarboxylation of 3-octaprenyl-4-hydroxy benzoate to 2-octaprenylphenol, an intermediate step in ubiquinone biosynthesis. This chain is 3-octaprenyl-4-hydroxybenzoate carboxy-lyase, found in Nitrosomonas europaea (strain ATCC 19718 / CIP 103999 / KCTC 2705 / NBRC 14298).